The chain runs to 245 residues: Probable 2-phosphosulfolactate phosphatase (245 aa).

This sequence belongs to the ComB family. Mg(2+) is required as a cofactor.

It carries out the reaction (2R)-O-phospho-3-sulfolactate + H2O = (2R)-3-sulfolactate + phosphate. This Trichormus variabilis (strain ATCC 29413 / PCC 7937) (Anabaena variabilis) protein is Probable 2-phosphosulfolactate phosphatase.